A 219-amino-acid polypeptide reads, in one-letter code: Glutamine transport system permease protein GlnP (219 aa).

Topologically, residues 1 to 22 (MQFDWSAIWPAIPLLIEGAKMT) are periplasmic. The 191-residue stretch at 19-209 (AKMTLWISVL…IITLVLSFIL (191 aa)) folds into the ABC transmembrane type-1 domain. Residues 23–43 (LWISVLGLAGGLVIGLLAGFA) traverse the membrane as a helical segment. Topologically, residues 44-53 (RTFGGWIANH) are cytoplasmic. The chain crosses the membrane as a helical span at residues 54 to 74 (VALVFIEVIRGTPIVVQVMFI). Topologically, residues 75–88 (YFALPMAFNDLRID) are periplasmic. The chain crosses the membrane as a helical span at residues 89-109 (PFTAAVVTIMINSGAYIAEIT). The Cytoplasmic portion of the chain corresponds to 110–150 (RGAVLSIHKGFREAGLALGLSRWETIRYVILPLALRRMLPP). Residues 151 to 171 (LGNQWIISIKDTSLFIVIGVA) traverse the membrane as a helical segment. Topologically, residues 172–187 (ELTRQGQEIIAGNFRA) are periplasmic. Residues 188–208 (LEIWSAVAVFYLIITLVLSFI) form a helical membrane-spanning segment. Topologically, residues 209 to 219 (LRRLERRMKIL) are cytoplasmic.

It belongs to the binding-protein-dependent transport system permease family. HisMQ subfamily.

It is found in the cell inner membrane. Functionally, part of the binding-protein-dependent transport system for glutamine; probably responsible for the translocation of the substrate across the membrane. In Escherichia coli O6:H1 (strain CFT073 / ATCC 700928 / UPEC), this protein is Glutamine transport system permease protein GlnP (glnP).